A 484-amino-acid chain; its full sequence is MLPLPPAVTALSAPGKVLLTGGYLVLDRSYTGTVFALDARIHVIVQQLRRNHRREAASGSAHGRSDTPQAEGNVHGDKEDEGTIVVHSPQFVDAVWEYSIQRCEDGGGVLVKQRNDGPRNLFVETSLNFALTYISYVADSKDFGSLSITILADNDYYSETAFSKASGLRSSSRFVDFGVRLQEAHKTGLGSSAALVTALVSSLVIHRTMQPDDLGPGRDKLHNLAQAAHCAAQGKVGSGFDVAAAIYGSCLYRRFSPSILESVGDAGSPGFEERLFRIVEDADPQHPWDTECLDFGMKLPRGMQMVLCDVECGSQTPSMVRKVLEWRKQNQKEADMLWGALQSNNERLRLELRRLAQSPDEHTLSDFENVRTYIQRSRNHIRSMTQKSDVPIEPRVQTELLDALSELEGVIGGVVPGAGGYDAIVLLIQDNPDVITRLKAFFETWESKAEDDFGGKIGKVRLLGVRHGSEGVKNEMLEQYAGWV.

Positions 54–77 (REAASGSAHGRSDTPQAEGNVHGD) are disordered. 184–194 (AHKTGLGSSAA) lines the ATP pocket.

This sequence belongs to the GHMP kinase family. Mevalonate kinase subfamily.

The catalysed reaction is (R)-5-phosphomevalonate + ATP = (R)-5-diphosphomevalonate + ADP. The protein operates within isoprenoid biosynthesis; isopentenyl diphosphate biosynthesis via mevalonate pathway; isopentenyl diphosphate from (R)-mevalonate: step 2/3. Phosphomevalonate kinase; part of the second module of ergosterol biosynthesis pathway that includes the middle steps of the pathway. Erg8 converts 5-phosphomevalonate to 5-diphosphomevalonate. The second module is carried out in the vacuole and involves the formation of farnesyl diphosphate, which is also an important intermediate in the biosynthesis of ubiquinone, dolichol, heme and prenylated proteins. Activity by the mevalonate kinase erg12 (AFUA_4G07780) first converts mevalonate into 5-phosphomevalonate. 5-phosphomevalonate is then further converted to 5-diphosphomevalonate by the phosphomevalonate kinase erg8 (AFUA_5G10680). The diphosphomevalonate decarboxylase mvd1 (AFUA_4G07130) then produces isopentenyl diphosphate. The isopentenyl-diphosphate delta-isomerase idi1 (AFUA_6G11160) then catalyzes the 1,3-allylic rearrangement of the homoallylic substrate isopentenyl (IPP) to its highly electrophilic allylic isomer, dimethylallyl diphosphate (DMAPP). Finally the farnesyl diphosphate synthase erg20 (AFUA_5G02450) catalyzes the sequential condensation of isopentenyl pyrophosphate with dimethylallyl pyrophosphate, and then with the resultant geranylpyrophosphate to the ultimate product farnesyl pyrophosphate. The polypeptide is Phosphomevalonate kinase erg8 (Aspergillus fumigatus (strain ATCC MYA-4609 / CBS 101355 / FGSC A1100 / Af293) (Neosartorya fumigata)).